The following is a 272-amino-acid chain: 1,4-dihydroxy-2-naphthoyl-CoA synthase (272 aa).

Substrate contacts are provided by residues Arg-33, 72–76 (SGGDQ), Tyr-84, 116–120 (YAIGG), Thr-142, Ser-148, Tyr-245, and Lys-260. 141–143 (QTG) contributes to the hydrogencarbonate binding site.

This sequence belongs to the enoyl-CoA hydratase/isomerase family. MenB subfamily. Requires hydrogencarbonate as cofactor.

The catalysed reaction is 2-succinylbenzoyl-CoA + H(+) = 1,4-dihydroxy-2-naphthoyl-CoA + H2O. It functions in the pathway quinol/quinone metabolism; 1,4-dihydroxy-2-naphthoate biosynthesis; 1,4-dihydroxy-2-naphthoate from chorismate: step 6/7. It participates in quinol/quinone metabolism; menaquinone biosynthesis. Converts o-succinylbenzoyl-CoA (OSB-CoA) to 1,4-dihydroxy-2-naphthoyl-CoA (DHNA-CoA). The protein is 1,4-dihydroxy-2-naphthoyl-CoA synthase of Staphylococcus epidermidis (strain ATCC 12228 / FDA PCI 1200).